Here is a 454-residue protein sequence, read N- to C-terminus: Flavonoid 3-O-glucosyltransferase (454 aa).

Threonine 25 provides a ligand contact to UDP. The active-site Proton acceptor is the histidine 26. Arginine 89 contacts myricetin. The active-site Charge relay is the aspartate 124. Residues histidine 155, glutamate 192, and phenylalanine 202 each contribute to the myricetin site. 4 residues coordinate UDP: serine 282, serine 308, tryptophan 334, and alanine 335. The UDP-alpha-D-glucose site is built by alanine 335, glutamine 337, histidine 352, tryptophan 355, asparagine 356, serine 357, and glutamate 360. Histidine 352 contacts UDP. Residues asparagine 356, serine 357, and glutamate 360 each coordinate UDP. A myricetin-binding site is contributed by glycine 375. The UDP-alpha-D-glucose site is built by aspartate 376 and glutamine 377.

Belongs to the UDP-glycosyltransferase family. As to expression, highly expressed in flower buds, flowers and pods. Lower expression in leaves, petioles and stems.

The protein operates within secondary metabolite biosynthesis; flavonoid biosynthesis. Functionally, catalyzes the glycosylation of flavonoids at the 3-O-position. Glycosylates the 7-O-position if the 3-O-position is not available. Also able to perform 3-O-glycosylation of anthocyanidins. This Medicago truncatula (Barrel medic) protein is Flavonoid 3-O-glucosyltransferase (UGT78G1).